We begin with the raw amino-acid sequence, 930 residues long: Translation initiation factor IF-2 (930 aa).

Residues 50 to 67 (FKPAAAPKVEAKPAAPKV) are compositionally biased toward low complexity. 2 disordered regions span residues 50-217 (FKPA…SSEE) and 260-346 (EVVP…HELP). Composition is skewed to basic and acidic residues over residues 68–90 (SAEKKAEKSEPAKPAVAKEEAKP) and 110–125 (FKAEREARAKEQAERR). Positions 129-141 (KGNNRDQQQNGNR) are enriched in low complexity. 2 stretches are compositionally biased toward basic and acidic residues: residues 157–167 (RDNRRFNDQAK) and 262–295 (VPEKKEPAVDTRRKKQARPDKNRDDYDHEEDGPR). Over residues 309–318 (NQKNSNWNNN) the composition is skewed to low complexity. Positions 337–346 (VTERKFHELP) are enriched in basic and acidic residues. The 168-residue stretch at 432-599 (ERPPVVTIMG…TVLLVAEIQE (168 aa)) folds into the tr-type G domain. The G1 stretch occupies residues 441–448 (GHVDHGKT). 441-448 (GHVDHGKT) is a binding site for GTP. The segment at 466-470 (GITQH) is G2. The G3 stretch occupies residues 487–490 (DTPG). GTP contacts are provided by residues 487-491 (DTPGH) and 541-544 (NKID). Residues 541–544 (NKID) form a G4 region. The interval 577-579 (SAK) is G5.

Belongs to the TRAFAC class translation factor GTPase superfamily. Classic translation factor GTPase family. IF-2 subfamily.

Its subcellular location is the cytoplasm. In terms of biological role, one of the essential components for the initiation of protein synthesis. Protects formylmethionyl-tRNA from spontaneous hydrolysis and promotes its binding to the 30S ribosomal subunits. Also involved in the hydrolysis of GTP during the formation of the 70S ribosomal complex. The polypeptide is Translation initiation factor IF-2 (Streptococcus pneumoniae (strain CGSP14)).